A 410-amino-acid polypeptide reads, in one-letter code: E3 ubiquitin-protein ligase ICP0 (410 aa).

An RING-type zinc finger spans residues 46–85 (CPICLDVAATEAQTLPCMHKFCLDCIQRWTLTSTACPLCN). Positions 243–410 (TSESEAHSDS…IFIDLTQDDD (168 aa)) are disordered. Positions 287–315 (APRRSPRRARRAAVLRREQRRTRCLRRGR) are enriched in basic residues. Composition is skewed to low complexity over residues 329–340 (SSGEGSSAQHGA) and 348–399 (GSAN…PRSA).

Auto-ubiquitinated.

It catalyses the reaction S-ubiquitinyl-[E2 ubiquitin-conjugating enzyme]-L-cysteine + [acceptor protein]-L-lysine = [E2 ubiquitin-conjugating enzyme]-L-cysteine + N(6)-ubiquitinyl-[acceptor protein]-L-lysine.. Evades nuclear antiviral defenses triggered by dsDNA viruses. Acts during the initial stages of lytic infection and the reactivation of latent viral genome. Prevents the antiviral effect of nuclear bodies by degrading host PML and SP100. The sequence is that of E3 ubiquitin-protein ligase ICP0 (EP0) from Sus scrofa (Pig).